The sequence spans 122 residues: Large ribosomal subunit protein uL14 (122 aa).

This sequence belongs to the universal ribosomal protein uL14 family. As to quaternary structure, part of the 50S ribosomal subunit. Forms a cluster with proteins L3 and L19. In the 70S ribosome, L14 and L19 interact and together make contacts with the 16S rRNA in bridges B5 and B8.

Binds to 23S rRNA. Forms part of two intersubunit bridges in the 70S ribosome. The protein is Large ribosomal subunit protein uL14 of Campylobacter jejuni subsp. jejuni serotype O:6 (strain 81116 / NCTC 11828).